The following is an 873-amino-acid chain: Alanine--tRNA ligase (873 aa).

The Zn(2+) site is built by His562, His566, Cys663, and His667.

The protein belongs to the class-II aminoacyl-tRNA synthetase family. It depends on Zn(2+) as a cofactor.

Its subcellular location is the cytoplasm. It carries out the reaction tRNA(Ala) + L-alanine + ATP = L-alanyl-tRNA(Ala) + AMP + diphosphate. Its function is as follows. Catalyzes the attachment of alanine to tRNA(Ala) in a two-step reaction: alanine is first activated by ATP to form Ala-AMP and then transferred to the acceptor end of tRNA(Ala). Also edits incorrectly charged Ser-tRNA(Ala) and Gly-tRNA(Ala) via its editing domain. The polypeptide is Alanine--tRNA ligase (Bordetella petrii (strain ATCC BAA-461 / DSM 12804 / CCUG 43448)).